A 284-amino-acid polypeptide reads, in one-letter code: Hydrogenase expression/formation protein HupQ (284 aa).

Residues 1-23 (MIGTQSILPPGFGPGSHGEEDRL) are disordered.

The protein belongs to the HupH/HyaF family.

The polypeptide is Hydrogenase expression/formation protein HupQ (hupQ) (Azotobacter chroococcum mcd 1).